Consider the following 218-residue polypeptide: Capsid protein (218 aa).

Met-1 is subject to N-acetylmethionine; by host. A compositionally biased stretch (low complexity) spans 1-10; sequence MDKSESASAG. The disordered stretch occupies residues 1–30; the sequence is MDKSESASAGRNRRRRPRRGSRSASSSSDA. The segment covering 11 to 21 has biased composition (basic residues); it reads RNRRRRPRRGS.

The protein belongs to the cucumovirus capsid protein family.

It is found in the virion. Its function is as follows. Capsid protein. Probably binds RNA and plays a role in packaging. The polypeptide is Capsid protein (Cucumis sativus (Cucumber)).